Consider the following 1009-residue polypeptide: Protein naked cuticle (1009 aa).

2 stretches are compositionally biased toward polar residues: residues 68-83 (IITT…ASNK) and 121-130 (LPQDMSSSGS). Residues 68 to 166 (IITTPPGNAS…QQQTAAAATG (99 aa)) are disordered. Residues 152-166 (QQQQQQQQTAAAATG) show a composition bias toward low complexity. The tract at residues 206–282 (EFTCDVSVEG…TVSPEGKSKS (77 aa)) is interaction with dsh. Residues 217 to 253 (KSSQPLQFSFTFYDLDGHHGKITKDDIVGIVYTIYES) form the EF-hand domain. Disordered stretches follow at residues 328–433 (MSKQ…QQQL), 456–479 (AGNE…RQQD), and 515–580 (GNDS…QQQR). The span at 349-359 (RRQHRYRPRKL) shows a compositional bias: basic residues. A compositionally biased stretch (basic and acidic residues) spans 370–387 (NSEKEKERERERERESHA). Residues 403–414 (KSHHHHHHHGRY) are compositionally biased toward basic residues. Polar residues predominate over residues 515-525 (GNDSGNWQNRH). Composition is skewed to low complexity over residues 526–535 (LQQSLQQQPQ) and 570–580 (HQQLQQQQQQR). The interval 584–613 (ECWKSALNRNDLISIIRESMEKNRLCFQLN) is required for nuclear localization and inhibition of Wnt signaling. 4 disordered regions span residues 619–662 (NVSP…SPLS), 773–799 (SAAH…HNQK), 835–899 (LQQK…SAGS), and 955–982 (TESG…LDTS). 2 stretches are compositionally biased toward low complexity: residues 624 to 638 (RQPA…QRQR) and 653 to 662 (SPAAPQSPLS). The segment covering 843-857 (RRHRHKQQQQQHHHQ) has biased composition (basic residues). The span at 858–875 (QQQQQQQQQNQQQQQQQQ) shows a compositional bias: low complexity. Acidic residues predominate over residues 968 to 979 (EADEGQEQEVEL).

This sequence belongs to the NKD family. Interacts with dsh.

The protein localises to the cell membrane. It localises to the cytoplasm. Its subcellular location is the nucleus. In terms of biological role, cell autonomous antagonist of the canonical Wnt signaling pathway. May activate a second Wnt signaling pathway that controls planar cell polarity. Required for neuroblast specification. This Drosophila pseudoobscura pseudoobscura (Fruit fly) protein is Protein naked cuticle.